The chain runs to 1745 residues: DNA-directed RNA polymerase II subunit RPB1 (1745 aa).

Zn(2+) is bound by residues Cys67, Cys70, Cys77, His80, Cys107, Cys110, Cys148, and Cys167. Mg(2+)-binding residues include Asp481, Asp483, and Asp485. The segment at 810–822 (PQEFFFHAMGGRE) is bridging helix. Lys1247 participates in a covalent cross-link: Glycyl lysine isopeptide (Lys-Gly) (interchain with G-Cter in ubiquitin). A disordered region spans residues 1530-1745 (NGPTSPGFGD…KEQKDENGTH (216 aa)). The span at 1546 to 1730 (SPTSPAYSPT…SPRSPSYSPS (185 aa)) shows a compositional bias: low complexity. Tandem repeats lie at residues 1552–1558 (YSPTSPS), 1559–1565 (YSPTSPS), 1566–1572 (YSPTSPS), 1573–1579 (YSPTSPS), 1580–1586 (YSPTSPS), 1587–1593 (YSPTSPS), 1594–1600 (YSPTSPS), 1601–1607 (YSPTSPS), 1608–1614 (YSPTSPS), 1615–1621 (YSPTSPS), 1622–1628 (YSPTSPS), 1629–1635 (YSPTSPS), 1636–1642 (YSPTSPS), 1643–1649 (YSPTSPS), 1650–1656 (YSPTSPS), 1657–1663 (YSPTSPS), 1664–1670 (YSPTSPS), 1671–1677 (YSPTSPS), 1678–1684 (YSPTSPS), 1685–1691 (YSPTSPS), 1692–1698 (YSPTSPS), 1699–1705 (YSPTSPS), 1706–1712 (YSPTSPS), and 1713–1719 (YSPTSPQ). Residues 1552 to 1726 (YSPTSPSYSP…SPQYSPRSPS (175 aa)) are C-terminal domain (CTD); 25 X 7 AA approximate tandem repeats of Y-S-P-T-S-P-[TSAN]. The 25; approximate repeat unit spans residues 1720 to 1726 (YSPRSPS). Residues 1734-1745 (NDKEQKDENGTH) are compositionally biased toward basic and acidic residues.

It belongs to the RNA polymerase beta' chain family. Component of the RNA polymerase II (Pol II) complex consisting of 12 subunits. The tandem 7 residues repeats in the C-terminal domain (CTD) can be highly phosphorylated. The phosphorylation activates Pol II. Phosphorylation occurs mainly at residues 'Ser-2' and 'Ser-5' of the heptapeptide repeat. The phosphorylation state is believed to result from the balanced action of site-specific CTD kinases and phosphatase, and a 'CTD code' that specifies the position of Pol II within the transcription cycle has been proposed. In terms of processing, following transcription stress, the elongating form of RNA polymerase II (RNA pol IIo) is polyubiquitinated via 'Lys-63'-linkages on Lys-1247 at DNA damage sites without leading to degradation: ubiquitination promotes RNA pol IIo backtracking to allow access by the transcription-coupled nucleotide excision repair (TC-NER) machinery. Subsequent DEF1-dependent polyubiquitination by the elongin complex via 'Lys-48'-linkages may lead to proteasome-mediated degradation; presumably at stalled RNA pol II where TC-NER has failed, to halt global transcription and enable 'last resort' DNA repair pathways.

It localises to the nucleus. It catalyses the reaction RNA(n) + a ribonucleoside 5'-triphosphate = RNA(n+1) + diphosphate. In terms of biological role, DNA-dependent RNA polymerase catalyzes the transcription of DNA into RNA using the four ribonucleoside triphosphates as substrates. Largest and catalytic component of RNA polymerase II which synthesizes mRNA precursors and many functional non-coding RNAs. Forms the polymerase active center together with the second largest subunit. Pol II is the central component of the basal RNA polymerase II transcription machinery. It is composed of mobile elements that move relative to each other. RPB1 is part of the core element with the central large cleft, the clamp element that moves to open and close the cleft and the jaws that are thought to grab the incoming DNA template. At the start of transcription, a single-stranded DNA template strand of the promoter is positioned within the central active site cleft of Pol II. A bridging helix emanates from RPB1 and crosses the cleft near the catalytic site and is thought to promote translocation of Pol II by acting as a ratchet that moves the RNA-DNA hybrid through the active site by switching from straight to bent conformations at each step of nucleotide addition. During transcription elongation, Pol II moves on the template as the transcript elongates. Elongation is influenced by the phosphorylation status of the C-terminal domain (CTD) of Pol II largest subunit (RPB1), which serves as a platform for assembly of factors that regulate transcription initiation, elongation, termination and mRNA processing. This chain is DNA-directed RNA polymerase II subunit RPB1 (RPB1), found in Eremothecium gossypii (strain ATCC 10895 / CBS 109.51 / FGSC 9923 / NRRL Y-1056) (Yeast).